Consider the following 778-residue polypeptide: Probable cation-transporting ATPase exp7 (778 aa).

At M1 to I37 the chain is on the cytoplasmic side. Residues V38–L57 traverse the membrane as a helical segment. The Extracellular portion of the chain corresponds to A58–S64. Residues N65–L84 form a helical membrane-spanning segment. Topologically, residues R85–L209 are cytoplasmic. The chain crosses the membrane as a helical span at residues D210–L229. Residues E230 to S242 lie on the Extracellular side of the membrane. A helical membrane pass occupies residues V243–L260. Over L261–I586 the chain is Cytoplasmic. Residue D298 is the 4-aspartylphosphate intermediate of the active site. The Mg(2+) site is built by D532 and D536. The helical transmembrane segment at A587–I606 threads the bilayer. Topologically, residues C607–F624 are extracellular. Residues I625 to T645 traverse the membrane as a helical segment. At F646–L663 the chain is on the cytoplasmic side. Residues R664–A684 traverse the membrane as a helical segment. At S685 to S689 the chain is on the extracellular side. Residues E690 to S708 traverse the membrane as a helical segment. The Cytoplasmic portion of the chain corresponds to V709–F716. A helical transmembrane segment spans residues T717 to R739. The Extracellular portion of the chain corresponds to I740–Y757. A helical membrane pass occupies residues G758–K777. A topological domain (cytoplasmic) is located at residue K778.

The protein belongs to the cation transport ATPase (P-type) (TC 3.A.3) family.

The protein localises to the cell membrane. The enzyme catalyses ATP + H2O = ADP + phosphate + H(+). This is Probable cation-transporting ATPase exp7 (exp7) from Streptococcus pneumoniae serotype 4 (strain ATCC BAA-334 / TIGR4).